The chain runs to 355 residues: uncharacterized protein (355 aa).

Positions 1–21 are cleaved as a signal peptide; the sequence is MQKKVLFNDIVFVCFPITDNG. Asn20, Asn78, Asn87, Asn156, Asn159, and Asn274 each carry an N-linked (GlcNAc...) asparagine; by host glycan. Residues 22–331 lie on the Virion surface side of the membrane; that stretch reads SIIISDIGYS…SSTSFFSRYG (310 aa). The interval 288-317 is disordered; that stretch reads GSKSTPNGPNGPTPTPSNGPNGPTPVPGIP. Over residues 296–317 the composition is skewed to pro residues; sequence PNGPTPTPSNGPNGPTPVPGIP. Asn320 carries an N-linked (GlcNAc...) asparagine; by host glycan. The chain crosses the membrane as a helical span at residues 332–352; sequence LWIIIAIILLIVIISAVGIYF. The Intravirion portion of the chain corresponds to 353-355; the sequence is YLR.

Its subcellular location is the host membrane. It localises to the virion. This is an uncharacterized protein from Acanthamoeba polyphaga mimivirus (APMV).